Here is a 189-residue protein sequence, read N- to C-terminus: MVRRLIIGISGASGFQYGVKALELLRAQDVETHLVVSKGAEMARASETAYARDEVYALADFVHPIGNIGACIASGTFKTDGMLVAPCSMRTLASVAHGFGDNLLTRAADVVLKERRRLVLMVRETPLNLAHLDNMKRVTEMGGVVFPPVPAMYRKPQTADDIVAHSVAHALSLFGIDTPDSAEWQGMAD.

FMN-binding positions include 11–13, S37, 88–91, and R123; these read GAS and SMRT. Y153 contributes to the dimethylallyl phosphate binding site.

This sequence belongs to the UbiX/PAD1 family.

The catalysed reaction is dimethylallyl phosphate + FMNH2 = prenylated FMNH2 + phosphate. Its function is as follows. Flavin prenyltransferase that catalyzes the synthesis of the prenylated FMN cofactor (prenyl-FMN) for 4-hydroxy-3-polyprenylbenzoic acid decarboxylase UbiD. The prenyltransferase is metal-independent and links a dimethylallyl moiety from dimethylallyl monophosphate (DMAP) to the flavin N5 and C6 atoms of FMN. The sequence is that of Flavin prenyltransferase UbiX from Neisseria meningitidis serogroup B (strain ATCC BAA-335 / MC58).